A 106-amino-acid polypeptide reads, in one-letter code: Transcriptional and immune response regulator (106 aa).

As to quaternary structure, monomer. Interacts with NOTCH2 (via ANK repeats), the interaction inhibits the nuclear translocation of NOTCH2 N2ICD. Interacts (C-terminus) with CBY1 (C-terminus), TCIM competes with CTNNB1 for the interaction with CBY1.

It localises to the cytoplasm. The protein localises to the nucleus. The protein resides in the nucleolus. Its subcellular location is the nucleus speckle. Seems to be involved in the regulation of cell growth an differentiation, may play different and opposite roles depending on the tissue or cell type. May enhance the WNT-CTNNB1 pathway by relieving antagonistic activity of CBY1. Enhances the proliferation of follicular dendritic cells. Plays a role in the mitogen-activated MAPK2/3 signaling pathway, positively regulates G1-to-S-phase transition of the cell cycle. In endothelial cells, enhances key inflammatory mediators and inflammatory response through the modulation of NF-kappaB transcriptional regulatory activity. Involved in the regulation of heat shock response, seems to play a positive feedback with HSF1 to modulate heat-shock downstream gene expression. Plays a role in the regulation of hematopoiesis even if the mechanisms are unknown. In cancers such as thyroid or lung cancer, it has been described as promoter of cell proliferation, G1-to-S-phase transition and inhibitor of apoptosis. However, it negatively regulates self-renewal of liver cancer cells via suppresion of NOTCH2 signaling. The sequence is that of Transcriptional and immune response regulator (TCIM) from Bos taurus (Bovine).